We begin with the raw amino-acid sequence, 530 residues long: Chaperone Ric-8A (530 aa).

A Phosphoserine modification is found at Ser-435. 2 positions are modified to phosphothreonine: Thr-440 and Thr-442. Ser-501, Ser-522, Ser-523, and Ser-527 each carry phosphoserine.

This sequence belongs to the synembryn family. As to quaternary structure, interacts with GDP-bound G alpha proteins GNAI1, GNAO1 and GNAQ, and with GNA13 with lower affinity. Does not interact with G-alpha proteins when they are in complex with subunits beta and gamma. Interacts (via C-terminus) with RGS14; the interaction stimulates the dissociation of the complex between RGS14 and the active GTP-bound form of GNAI1. Interacts with NCS1; interaction is favored in the absence of Ca(2+) and myristoylation of NCS1 is not required. As to expression, expressed in neurons and neurites of the CA1 and CA2 subregions of the hippocampus (at protein level). In adult brain, it is expressed in the neocortex, hippocampus and cerebellum as well as in the pineal gland and ependymal layer.

It is found in the cytoplasm. It localises to the cell cortex. In terms of biological role, chaperone that specifically binds and folds nascent G alpha proteins prior to G protein heterotrimer formation, promoting their stability and activity: folds GNAI1, GNAO1, GNA13 and GNAQ. Does not fold G(s) G-alpha proteins GNAS nor GNAL. Also acts as a guanine nucleotide exchange factor (GEF) for G alpha proteins by stimulating exchange of bound GDP for free GTP. Involved in regulation of microtubule pulling forces during mitotic movement of chromosomes by stimulating G(i)-alpha protein (GNAI1), possibly leading to release G(i)-alpha-GTP and NuMA proteins from the NuMA-GPSM2-G(i)-alpha-GDP complex. Also acts as an activator for G(q)-alpha (GNAQ) protein by enhancing the G(q)-coupled receptor-mediated ERK activation. This is Chaperone Ric-8A from Mus musculus (Mouse).